Consider the following 203-residue polypeptide: Cardiotrophin-2 (203 aa).

An N-terminal signal peptide occupies residues 1-21 (MSCSLARLCLLTLLSPPLSSA). Asparagine 43 carries an N-linked (GlcNAc...) asparagine glycan.

Belongs to the IL-6 superfamily.

It is found in the secreted. Functionally, may have an important role in neuronal precursor development and maturation. This chain is Cardiotrophin-2 (CTF2), found in Pan troglodytes (Chimpanzee).